A 273-amino-acid polypeptide reads, in one-letter code: Tryptophan synthase alpha chain (273 aa).

Active-site proton acceptor residues include Glu49 and Asp60.

This sequence belongs to the TrpA family. Tetramer of two alpha and two beta chains.

It catalyses the reaction (1S,2R)-1-C-(indol-3-yl)glycerol 3-phosphate + L-serine = D-glyceraldehyde 3-phosphate + L-tryptophan + H2O. It functions in the pathway amino-acid biosynthesis; L-tryptophan biosynthesis; L-tryptophan from chorismate: step 5/5. Its function is as follows. The alpha subunit is responsible for the aldol cleavage of indoleglycerol phosphate to indole and glyceraldehyde 3-phosphate. This chain is Tryptophan synthase alpha chain, found in Halorhodospira halophila (strain DSM 244 / SL1) (Ectothiorhodospira halophila (strain DSM 244 / SL1)).